The primary structure comprises 460 residues: MSLYSSLPSIDKLLKTPEGARLSHEFGHTAVVNICRQLIEQGREYIKNENKLLPVFQDISDTLREIELQLHAQSQVKIQSVHNLTGTILHTNLGRALWSDAAQHAALTSMSHNVALEYDLEEGKRSHRDHYISDLLCQLTGAEAACIVNNNAAAVLLMLATFAQGKEVIISRGELIEIGGAFRIPDIMQQAGCKLVEVGTTNRTHLSDYRHAINENTAFLMKVHSSNYQICGFTKSVTEAELVTLAREFNLPVMTDLGSGALVDLAQYGLPKEPTVQEKWAQGVELISFSGDKLLGGPQAGIIVGKKAWIDRLQTHPLKRALRCDKVILAGLEATLRLYLQPEKLSQHLTTLRLLTQPVEALHEQAEQLQSVLLTKLTTDYSVAITNSVAQIGSGSQPMATIPSVAVTISTEKAGKLTALLQRFKALPQPIICRVEKEKIWLDLRGLADIDSLLKTIMQL.

Position 293 is an N6-(pyridoxal phosphate)lysine (lysine 293).

The protein belongs to the SelA family. The cofactor is pyridoxal 5'-phosphate.

The protein resides in the cytoplasm. The enzyme catalyses L-seryl-tRNA(Sec) + selenophosphate + H(+) = L-selenocysteinyl-tRNA(Sec) + phosphate. The protein operates within aminoacyl-tRNA biosynthesis; selenocysteinyl-tRNA(Sec) biosynthesis; selenocysteinyl-tRNA(Sec) from L-seryl-tRNA(Sec) (bacterial route): step 1/1. In terms of biological role, converts seryl-tRNA(Sec) to selenocysteinyl-tRNA(Sec) required for selenoprotein biosynthesis. The polypeptide is L-seryl-tRNA(Sec) selenium transferase (Pasteurella multocida (strain Pm70)).